Here is a 311-residue protein sequence, read N- to C-terminus: Dehydrogenase/reductase SDR family member 7C (311 aa).

A signal peptide spans Met1 to Gly18. NAD(+)-binding residues include Ser47, Leu49, Tyr191, Lys195, and Ser226. Tyr191 (proton acceptor) is an active-site residue.

The protein belongs to the short-chain dehydrogenases/reductases (SDR) family.

It localises to the sarcoplasmic reticulum membrane. The enzyme catalyses all-trans-retinol + NAD(+) = all-trans-retinal + NADH + H(+). NADH-dependent oxidoreductase which catalyzes the oxidation of all-trans-retinol to all-trans-retinal. Plays a role in the regulation of cardiac and skeletal muscle metabolic functions. Maintains Ca(2+) intracellular homeostasis by repressing Ca(2+) release from the sarcoplasmic reticulum (SR) in myotubes, possibly through local alternations in NAD/NADH or retinol/retinal. Also plays a role in Ca(2+) homeostasis by controlling Ca(2+) overload in the cytosol and the SR in myotubes. Involved in glucose uptake into skeletal muscles and muscle performance by activating PI3K and mTORC2-mediated AKT1 phosphorylation signaling pathways, possibly through the action of its downstream catalytic product all-trans-retinoic acid. The polypeptide is Dehydrogenase/reductase SDR family member 7C (DHRS7C) (Bos taurus (Bovine)).